Here is a 303-residue protein sequence, read N- to C-terminus: Trans-enoyl reductase tazE (303 aa).

The tract at residues 1-26 is disordered; sequence MTAEHDAAILPKPGGPLAVGKRATPE. 44 to 49 contacts NADP(+); that stretch reads CDYYQR. 136-143 contributes to the substrate binding site; it reads LAVLTALT. NADP(+)-binding positions include 170–173, 193–196, Y211, and 246–247; these read SSSV, SPKH, and LD. 265-269 contributes to the substrate binding site; that stretch reads VLPEC.

It belongs to the zinc-containing alcohol dehydrogenase family.

The protein operates within secondary metabolite biosynthesis. In terms of biological role, trans-enoyl reductase; part of the gene cluster that mediates the biosynthesis of azaterrilone A and other azaphilones, a class of fungal metabolites characterized by a highly oxygenated pyrano-quinone bicyclic core and exhibiting a broad range of bioactivities. The first step of the pathway begins with the non-reducing polyketide synthase tazA that assembles one acetyl-CoA starter unit, five malonyl-CoA units, and catalyzes a series of Claisen condensations, methylation, PT-mediated cyclization, and finally releases the first hexaketide precursor through the R-domain. The tazA product then undergoes reduction on its terminal ketone and the following pyran-ring formation by yet undetermined enzyme(s). Dehydration and enoyl reduction, possibly involving the trans-enoyl reductase tazE leads to the next intermediate. TazD is predicted as an acetyltransferase and might catalyze the acetylation steps leading to the synthesis of azaterrilone A. Azaterrilone A is not the final product of the taz pathway and both the highly reducing polyketide synthase tazB and the dual enzyme tazHJ catalyze late steps of the pathway, leading to the production of the 2 final stereoisomers that contain additional polyketide modification whose structures have still to be determined. This chain is Trans-enoyl reductase tazE, found in Aspergillus terreus (strain NIH 2624 / FGSC A1156).